The following is a 741-amino-acid chain: ABC transporter D family member 2 (741 aa).

3 helical membrane-spanning segments follow: residues 39-59, 119-139, and 260-280; these read GSLGKKVFILLALGGGAFSLV, FLSLLYLTALLFARTMLSVSI, and VVVMGWGSPLLMFSYFIVSGF. Residues 131–409 enclose the ABC transmembrane type-1 domain; sequence ARTMLSVSIA…LMVALSQAIG (279 aa). Residues 518 to 740 form the ABC transporter domain; that stretch reads IKFENVSIVS…DDDHLKKPLS (223 aa). ATP is bound at residue 551 to 558; sequence GPNGSGKS.

Belongs to the ABC transporter superfamily. ABCD family. Peroxisomal fatty acyl CoA transporter (TC 3.A.1.203) subfamily.

It localises to the membrane. The polypeptide is ABC transporter D family member 2 (abcD2) (Dictyostelium discoideum (Social amoeba)).